Consider the following 353-residue polypeptide: Protein RecA (353 aa).

ATP is bound at residue 74–81; sequence GPESSGKT.

This sequence belongs to the RecA family.

The protein localises to the cytoplasm. Functionally, can catalyze the hydrolysis of ATP in the presence of single-stranded DNA, the ATP-dependent uptake of single-stranded DNA by duplex DNA, and the ATP-dependent hybridization of homologous single-stranded DNAs. It interacts with LexA causing its activation and leading to its autocatalytic cleavage. The sequence is that of Protein RecA from Bordetella bronchiseptica (strain ATCC BAA-588 / NCTC 13252 / RB50) (Alcaligenes bronchisepticus).